The following is an 869-amino-acid chain: Bifunctional uridylyltransferase/uridylyl-removing enzyme (869 aa).

Residues 1–332 (MTDTPAERPD…QFDGEATPEP (332 aa)) are uridylyltransferase. Positions 333–691 (LGGGFSLRRG…RRAVPDNDAL (359 aa)) are uridylyl-removing. The HD domain occupies 450–572 (VDQHTLMVLR…VGTRERLDYL (123 aa)). ACT domains follow at residues 692–774 (EVFV…RAVP) and 798–869 (RISL…LDPV).

It belongs to the GlnD family. Requires Mg(2+) as cofactor.

It carries out the reaction [protein-PII]-L-tyrosine + UTP = [protein-PII]-uridylyl-L-tyrosine + diphosphate. The enzyme catalyses [protein-PII]-uridylyl-L-tyrosine + H2O = [protein-PII]-L-tyrosine + UMP + H(+). With respect to regulation, uridylyltransferase (UTase) activity is inhibited by glutamine, while glutamine activates uridylyl-removing (UR) activity. Modifies, by uridylylation and deuridylylation, the PII regulatory proteins (GlnB and homologs), in response to the nitrogen status of the cell that GlnD senses through the glutamine level. Under low glutamine levels, catalyzes the conversion of the PII proteins and UTP to PII-UMP and PPi, while under higher glutamine levels, GlnD hydrolyzes PII-UMP to PII and UMP (deuridylylation). Thus, controls uridylylation state and activity of the PII proteins, and plays an important role in the regulation of nitrogen assimilation and metabolism. The sequence is that of Bifunctional uridylyltransferase/uridylyl-removing enzyme from Xanthomonas axonopodis pv. citri (strain 306).